We begin with the raw amino-acid sequence, 589 residues long: UvrABC system protein C (589 aa).

A GIY-YIG domain is found at 10–87 (ESSGVYLMKK…IKKYSPKYNI (78 aa)). The UVR domain maps to 197 to 232 (SKLINELTALMNKASQDMDFEKSIIYREQIKELKSI).

It belongs to the UvrC family. As to quaternary structure, interacts with UvrB in an incision complex.

The protein resides in the cytoplasm. The UvrABC repair system catalyzes the recognition and processing of DNA lesions. UvrC both incises the 5' and 3' sides of the lesion. The N-terminal half is responsible for the 3' incision and the C-terminal half is responsible for the 5' incision. This is UvrABC system protein C from Fusobacterium nucleatum subsp. nucleatum (strain ATCC 25586 / DSM 15643 / BCRC 10681 / CIP 101130 / JCM 8532 / KCTC 2640 / LMG 13131 / VPI 4355).